The sequence spans 303 residues: Nucleotide-binding protein Acry_0446 (303 aa).

Residue 10–17 (GLSGAGRN) participates in ATP binding. 54 to 57 (DART) serves as a coordination point for GTP.

This sequence belongs to the RapZ-like family.

Functionally, displays ATPase and GTPase activities. This chain is Nucleotide-binding protein Acry_0446, found in Acidiphilium cryptum (strain JF-5).